Consider the following 253-residue polypeptide: Triosephosphate isomerase (253 aa).

Position 8 to 10 (8 to 10 (NWK)) interacts with substrate. Catalysis depends on His-93, which acts as the Electrophile. The active-site Proton acceptor is Glu-165. Substrate contacts are provided by residues Gly-171, Ser-210, and 231–232 (GG).

It belongs to the triosephosphate isomerase family. Homodimer.

The protein localises to the cytoplasm. It carries out the reaction D-glyceraldehyde 3-phosphate = dihydroxyacetone phosphate. The protein operates within carbohydrate biosynthesis; gluconeogenesis. Its pathway is carbohydrate degradation; glycolysis; D-glyceraldehyde 3-phosphate from glycerone phosphate: step 1/1. Functionally, involved in the gluconeogenesis. Catalyzes stereospecifically the conversion of dihydroxyacetone phosphate (DHAP) to D-glyceraldehyde-3-phosphate (G3P). The chain is Triosephosphate isomerase from Francisella tularensis subsp. tularensis (strain FSC 198).